The chain runs to 707 residues: Polyribonucleotide nucleotidyltransferase (707 aa).

Mg(2+) is bound by residues D486 and D492. The region spanning 553–612 (PRIHIIKINPEKIKDVIGKGGSVIRMLTEETGTIIEIEDDGTVKISSTVKEKAKNAIRRI) is the KH domain. The 69-residue stretch at 622–690 (GRIYSGKVTR…RQGRLRLSIK (69 aa)) folds into the S1 motif domain.

Belongs to the polyribonucleotide nucleotidyltransferase family. In terms of assembly, component of the RNA degradosome, which is a multiprotein complex involved in RNA processing and mRNA degradation. Mg(2+) is required as a cofactor.

The protein localises to the cytoplasm. It carries out the reaction RNA(n+1) + phosphate = RNA(n) + a ribonucleoside 5'-diphosphate. Its function is as follows. Involved in mRNA degradation. Catalyzes the phosphorolysis of single-stranded polyribonucleotides processively in the 3'- to 5'-direction. In Buchnera aphidicola subsp. Acyrthosiphon pisum (strain 5A), this protein is Polyribonucleotide nucleotidyltransferase.